The chain runs to 285 residues: Probable endonuclease 4 (285 aa).

Zn(2+) contacts are provided by His69, His109, Glu145, Asp179, His182, His216, Asp229, His231, and Glu261.

This sequence belongs to the AP endonuclease 2 family. It depends on Zn(2+) as a cofactor.

The catalysed reaction is Endonucleolytic cleavage to 5'-phosphooligonucleotide end-products.. In terms of biological role, endonuclease IV plays a role in DNA repair. It cleaves phosphodiester bonds at apurinic or apyrimidinic (AP) sites, generating a 3'-hydroxyl group and a 5'-terminal sugar phosphate. The chain is Probable endonuclease 4 from Shigella boydii serotype 18 (strain CDC 3083-94 / BS512).